Here is a 37-residue protein sequence, read N- to C-terminus: Hemocyanin subunit B (37 aa).

It belongs to the tyrosinase family. Hemocyanin subfamily. As to expression, hemolymph.

Its subcellular location is the secreted. The protein localises to the extracellular space. Hemocyanins are copper-containing oxygen carriers occurring freely dissolved in the hemolymph of many mollusks and arthropods. In Cancer pagurus (Rock crab), this protein is Hemocyanin subunit B.